The sequence spans 365 residues: Alanine racemase (365 aa).

Lys32 functions as the Proton acceptor; specific for D-alanine in the catalytic mechanism. Position 32 is an N6-(pyridoxal phosphate)lysine (Lys32). A substrate-binding site is contributed by Arg128. The Proton acceptor; specific for L-alanine role is filled by Tyr257. Met305 contributes to the substrate binding site.

This sequence belongs to the alanine racemase family. Requires pyridoxal 5'-phosphate as cofactor.

It carries out the reaction L-alanine = D-alanine. Its pathway is amino-acid biosynthesis; D-alanine biosynthesis; D-alanine from L-alanine: step 1/1. In terms of biological role, catalyzes the interconversion of L-alanine and D-alanine. May also act on other amino acids. The polypeptide is Alanine racemase (alr) (Francisella tularensis subsp. holarctica (strain LVS)).